Consider the following 207-residue polypeptide: Ribosomal RNA small subunit methyltransferase G (207 aa).

S-adenosyl-L-methionine is bound by residues Gly74, Leu79, 125–126, and Arg140; that span reads VE.

It belongs to the methyltransferase superfamily. RNA methyltransferase RsmG family.

Its subcellular location is the cytoplasm. The enzyme catalyses guanosine(527) in 16S rRNA + S-adenosyl-L-methionine = N(7)-methylguanosine(527) in 16S rRNA + S-adenosyl-L-homocysteine. Specifically methylates the N7 position of guanine in position 527 of 16S rRNA. This is Ribosomal RNA small subunit methyltransferase G from Shewanella piezotolerans (strain WP3 / JCM 13877).